A 142-amino-acid chain; its full sequence is Ribosome maturation factor RimP (142 aa).

Belongs to the RimP family.

It is found in the cytoplasm. In terms of biological role, required for maturation of 30S ribosomal subunits. The sequence is that of Ribosome maturation factor RimP from Nitrosospira multiformis (strain ATCC 25196 / NCIMB 11849 / C 71).